A 252-amino-acid polypeptide reads, in one-letter code: 5-oxoprolinase subunit A (252 aa).

The protein belongs to the LamB/PxpA family. Forms a complex composed of PxpA, PxpB and PxpC.

The catalysed reaction is 5-oxo-L-proline + ATP + 2 H2O = L-glutamate + ADP + phosphate + H(+). In terms of biological role, catalyzes the cleavage of 5-oxoproline to form L-glutamate coupled to the hydrolysis of ATP to ADP and inorganic phosphate. The sequence is that of 5-oxoprolinase subunit A from Photorhabdus laumondii subsp. laumondii (strain DSM 15139 / CIP 105565 / TT01) (Photorhabdus luminescens subsp. laumondii).